Here is a 268-residue protein sequence, read N- to C-terminus: Small ribosomal subunit protein uS2 (268 aa).

Residues 161–179 (IPCNNDKYSIALMLWMLAR) are laminin-binding.

It belongs to the universal ribosomal protein uS2 family. In terms of assembly, component of the small ribosomal subunit. Mature ribosomes consist of a small (40S) and a large (60S) subunit. The 40S subunit contains about 33 different proteins and 1 molecule of RNA (18S). The 60S subunit contains about 49 different proteins and 3 molecules of RNA (28S, 5.8S and 5S). Interacts with ribosomal protein S21.

It localises to the cytoplasm. Its function is as follows. Required for the assembly and/or stability of the 40S ribosomal subunit. Required for the processing of the 20S rRNA-precursor to mature 18S rRNA in a late step of the maturation of 40S ribosomal subunits. Binds laminin. The protein is Small ribosomal subunit protein uS2 (egmo3) of Echinococcus granulosus (Hydatid tapeworm).